The primary structure comprises 378 residues: Glutamate 5-kinase (378 aa).

ATP is bound at residue Lys14. The substrate site is built by Ser54, Asp141, and Asn153. 173-174 is a binding site for ATP; it reads SD. The 78-residue stretch at 279–356 folds into the PUA domain; it reads AGRLTVDAGA…DEISEILGYD (78 aa).

The protein belongs to the glutamate 5-kinase family.

The protein resides in the cytoplasm. It catalyses the reaction L-glutamate + ATP = L-glutamyl 5-phosphate + ADP. It functions in the pathway amino-acid biosynthesis; L-proline biosynthesis; L-glutamate 5-semialdehyde from L-glutamate: step 1/2. Functionally, catalyzes the transfer of a phosphate group to glutamate to form L-glutamate 5-phosphate. This Brucella anthropi (strain ATCC 49188 / DSM 6882 / CCUG 24695 / JCM 21032 / LMG 3331 / NBRC 15819 / NCTC 12168 / Alc 37) (Ochrobactrum anthropi) protein is Glutamate 5-kinase.